The chain runs to 128 residues: Small nuclear ribonucleoprotein associated homolog 13 (128 aa).

Belongs to the eukaryotic ribosomal protein eL8 family.

The protein localises to the nucleus. It is found in the nucleolus. Functionally, binds to the 5'-stem-loop of U4 snRNA and may play a role in the late stage of spliceosome assembly. The protein undergoes a conformational change upon RNA-binding. This is Small nuclear ribonucleoprotein associated homolog 13 from Caenorhabditis elegans.